A 507-amino-acid chain; its full sequence is Prolyl carboxy peptidase like protein 5 (507 aa).

Positions 1–16 are cleaved as a signal peptide; the sequence is MNIFISLAILIATTHC. Asparagine 125 is a glycosylation site (N-linked (GlcNAc...) asparagine). Serine 172 (charge relay system) is an active-site residue. Asparagine 332 and asparagine 407 each carry an N-linked (GlcNAc...) asparagine glycan. Active-site charge relay system residues include aspartate 439 and histidine 466.

The protein belongs to the peptidase S28 family.

In Caenorhabditis elegans, this protein is Prolyl carboxy peptidase like protein 5.